Reading from the N-terminus, the 246-residue chain is 2-C-methyl-D-erythritol 4-phosphate cytidylyltransferase (246 aa).

This sequence belongs to the IspD/TarI cytidylyltransferase family. IspD subfamily.

It catalyses the reaction 2-C-methyl-D-erythritol 4-phosphate + CTP + H(+) = 4-CDP-2-C-methyl-D-erythritol + diphosphate. It participates in isoprenoid biosynthesis; isopentenyl diphosphate biosynthesis via DXP pathway; isopentenyl diphosphate from 1-deoxy-D-xylulose 5-phosphate: step 2/6. Functionally, catalyzes the formation of 4-diphosphocytidyl-2-C-methyl-D-erythritol from CTP and 2-C-methyl-D-erythritol 4-phosphate (MEP). The protein is 2-C-methyl-D-erythritol 4-phosphate cytidylyltransferase of Chlorobaculum parvum (strain DSM 263 / NCIMB 8327) (Chlorobium vibrioforme subsp. thiosulfatophilum).